Reading from the N-terminus, the 199-residue chain is V-type proton ATPase subunit E (199 aa).

The protein belongs to the V-ATPase E subunit family.

Functionally, produces ATP from ADP in the presence of a proton gradient across the membrane. This chain is V-type proton ATPase subunit E, found in Clostridium botulinum (strain Okra / Type B1).